The following is a 140-amino-acid chain: Sex-regulated protein janus-B (140 aa).

Arg-42 contributes to the substrate binding site. Catalysis depends on His-69, which acts as the Proton acceptor. Position 110-112 (110-112 (SRT)) interacts with substrate.

It belongs to the janus family.

In terms of biological role, janA and janB regulate somatic sex differentiation. This is Sex-regulated protein janus-B (janB) from Drosophila teissieri (Fruit fly).